Consider the following 282-residue polypeptide: Bifunctional protein FolD (282 aa).

NADP(+)-binding positions include 164 to 166, Ile-189, and Ile-230; that span reads GAS.

It belongs to the tetrahydrofolate dehydrogenase/cyclohydrolase family. As to quaternary structure, homodimer.

It catalyses the reaction (6R)-5,10-methylene-5,6,7,8-tetrahydrofolate + NADP(+) = (6R)-5,10-methenyltetrahydrofolate + NADPH. The catalysed reaction is (6R)-5,10-methenyltetrahydrofolate + H2O = (6R)-10-formyltetrahydrofolate + H(+). It participates in one-carbon metabolism; tetrahydrofolate interconversion. Catalyzes the oxidation of 5,10-methylenetetrahydrofolate to 5,10-methenyltetrahydrofolate and then the hydrolysis of 5,10-methenyltetrahydrofolate to 10-formyltetrahydrofolate. In Nitratiruptor sp. (strain SB155-2), this protein is Bifunctional protein FolD.